A 398-amino-acid chain; its full sequence is Stearoyl-[acyl-carrier-protein] 9-desaturase, chloroplastic (398 aa).

A chloroplast-targeting transit peptide spans 1 to 34 (MALKLNPLASQPYNFPSSARPPISTFRSPKFLCL). Fe cation-binding residues include glutamate 140, glutamate 178, histidine 181, glutamate 231, glutamate 264, and histidine 267.

The protein belongs to the fatty acid desaturase type 2 family. In terms of assembly, homodimer. It depends on Fe(2+) as a cofactor.

The protein resides in the plastid. Its subcellular location is the chloroplast. It carries out the reaction octadecanoyl-[ACP] + 2 reduced [2Fe-2S]-[ferredoxin] + O2 + 2 H(+) = (9Z)-octadecenoyl-[ACP] + 2 oxidized [2Fe-2S]-[ferredoxin] + 2 H2O. Its pathway is lipid metabolism; fatty acid metabolism. Its function is as follows. Converts stearoyl-ACP to oleoyl-ACP by introduction of a cis double bond between carbons 9 and 10 of the acyl chain. In Brassica napus (Rape), this protein is Stearoyl-[acyl-carrier-protein] 9-desaturase, chloroplastic.